We begin with the raw amino-acid sequence, 405 residues long: Serine--glyoxylate aminotransferase (405 aa).

Lys196 is modified (N6-(pyridoxal phosphate)lysine).

Belongs to the class-V pyridoxal-phosphate-dependent aminotransferase family. Pyridoxal 5'-phosphate serves as cofactor.

The enzyme catalyses glyoxylate + L-serine = 3-hydroxypyruvate + glycine. It participates in one-carbon metabolism; formaldehyde assimilation via serine pathway. The polypeptide is Serine--glyoxylate aminotransferase (sgaA) (Hyphomicrobium methylovorum).